The primary structure comprises 293 residues: ESX-3 secretion-associated protein EspG3 (293 aa).

The protein belongs to the EspG family.

It is found in the cytoplasm. This Mycolicibacterium smegmatis (strain ATCC 700084 / mc(2)155) (Mycobacterium smegmatis) protein is ESX-3 secretion-associated protein EspG3.